The chain runs to 397 residues: Ethanolaminephosphotransferase 1 (397 aa).

Alanine 2 bears the N-acetylalanine mark. The next 10 membrane-spanning stretches (helical) occupy residues 47–69 (WLAP…LLMA), 84–103 (HVPD…AYTL), 123–145 (LFDH…SIFG), 150–172 (GVSV…LSHW), 179–201 (ILFL…IVTA), 221–243 (LFTA…LNFF), 256–278 (VYEA…AWIL), 291–310 (VFYF…LIVC), 317–339 (CPTL…LGVA), and 344–366 (SILL…VRVV). Residue selenocysteine 387 is a non-standard amino acid, selenocysteine.

Belongs to the CDP-alcohol phosphatidyltransferase class-I family. The cofactor is Mg(2+). Requires Mn(2+) as cofactor.

The protein resides in the endoplasmic reticulum membrane. The catalysed reaction is CDP-ethanolamine + a 1,2-diacyl-sn-glycerol = a 1,2-diacyl-sn-glycero-3-phosphoethanolamine + CMP + H(+). The enzyme catalyses 1-O-alkyl-2-acyl-sn-glycerol + CDP-ethanolamine = a 1-O-alkyl-2-acyl-sn-glycero-3-phosphoethanolamine + CMP + H(+). The protein operates within phospholipid metabolism; phosphatidylethanolamine biosynthesis; phosphatidylethanolamine from ethanolamine: step 3/3. Functionally, ethanolaminephosphotransferase that catalyzes the transfer of phosphoethanolamine (PE) from CDP-ethanolamine to lipid acceptors, the final step in the synthesis of PE via the 'Kennedy' pathway. PE is the second most abundant phospholipid of membranes in mammals and is involved in various membrane-related cellular processes. The enzyme is critical for the synthesis of several PE species and also catalyzes the synthesis of plasmanyl-PE, a lipid required for proper myelination and neurodevelopment, from 1-alkyl-2-acylglycerol. The sequence is that of Ethanolaminephosphotransferase 1 from Pongo abelii (Sumatran orangutan).